We begin with the raw amino-acid sequence, 193 residues long: MSDDDSRASTSSSSSSSSNQQTEKETNTPKKKESKVSMSKNSKLLSTSAKRIQKELADITLDPPPNCSAGPKGDNIYEWRSTILGPPGSVYEGGVFFLDITFTPEYPFKPPKVTFRTRIYHCNINSQGVICLDILKDNWSPALTISKVLLSICSLLTDCNPADPLVGSIATQYMTNRAEHDRMARQWTKRYAT.

Positions 1–45 (MSDDDSRASTSSSSSSSSNQQTEKETNTPKKKESKVSMSKNSKLL) are disordered. At Ser-2 the chain carries N-acetylserine. Over residues 8–18 (ASTSSSSSSSS) the composition is skewed to low complexity. The span at 22 to 35 (TEKETNTPKKKESK) shows a compositional bias: basic and acidic residues. Residues 36–45 (VSMSKNSKLL) are compositionally biased toward polar residues. One can recognise a UBC core domain in the interval 47 to 193 (TSAKRIQKEL…ARQWTKRYAT (147 aa)). Cys-131 (glycyl thioester intermediate) is an active-site residue. Lys-136 participates in a covalent cross-link: Glycyl lysine isopeptide (Lys-Gly) (interchain with G-Cter in ISG15).

It belongs to the ubiquitin-conjugating enzyme family. In terms of assembly, interacts with RNF14. Post-translationally, ISGylation suppresses ubiquitin E2 enzyme activity. Autoubiquitinated in vitro.

It localises to the nucleus. It carries out the reaction S-ubiquitinyl-[E1 ubiquitin-activating enzyme]-L-cysteine + [E2 ubiquitin-conjugating enzyme]-L-cysteine = [E1 ubiquitin-activating enzyme]-L-cysteine + S-ubiquitinyl-[E2 ubiquitin-conjugating enzyme]-L-cysteine.. It catalyses the reaction S-ubiquitinyl-[E1 ubiquitin-activating enzyme]-L-cysteine + [acceptor protein]-L-lysine = [E1 ubiquitin-activating enzyme]-L-cysteine + N(6)-monoubiquitinyl-[acceptor protein]-L-lysine.. It functions in the pathway protein modification; protein ubiquitination. Its function is as follows. Accepts ubiquitin from the E1 complex and catalyzes its covalent attachment to other proteins. Catalyzes the covalent attachment of ISG15 to other proteins. Mediates the selective degradation of short-lived and abnormal proteins. In vitro also catalyzes 'Lys-48'-linked polyubiquitination. Catalyzes monoubiquitination of other proteins in both an E3-dependent and E3-independent manner. The polypeptide is Ubiquitin-conjugating enzyme E2 E1 (Homo sapiens (Human)).